Reading from the N-terminus, the 520-residue chain is Cytochrome P450 716A67 (520 aa).

A helical membrane pass occupies residues 4–24; the sequence is SLAIYYGIILITVTLGLVYTW. Cys466 serves as a coordination point for heme.

Belongs to the cytochrome P450 family. Heme is required as a cofactor.

It is found in the membrane. Catalyzes hydroxylation at the C-2 position of different intermediates of the hemolytic sapogenin biosynthetic pathway downstream of oleanolic acid synthesis. This chain is Cytochrome P450 716A67, found in Medicago truncatula (Barrel medic).